The primary structure comprises 379 residues: Cytochrome b (379 aa).

A run of 4 helical transmembrane segments spans residues 33–53 (FGSL…FLAM), 77–98 (WLIR…YLHI), 113–133 (WNIG…GYVL), and 178–198 (FFAF…IHLL). Heme b-binding residues include His83 and His97. The heme b site is built by His182 and His196. His201 lines the a ubiquinone pocket. 4 helical membrane-spanning segments follow: residues 226–246 (YKDL…ALFY), 288–308 (LGGV…PILH), 320–340 (ASQL…WIGG), and 347–367 (YIII…VLNP).

It belongs to the cytochrome b family. In terms of assembly, the cytochrome bc1 complex contains 3 respiratory subunits (MT-CYB, CYC1 and UQCRFS1), 2 core proteins (UQCRC1 and UQCRC2) and probably 6 low-molecular weight proteins. Heme b is required as a cofactor.

It is found in the mitochondrion inner membrane. Component of the ubiquinol-cytochrome c reductase complex (complex III or cytochrome b-c1 complex) that is part of the mitochondrial respiratory chain. The b-c1 complex mediates electron transfer from ubiquinol to cytochrome c. Contributes to the generation of a proton gradient across the mitochondrial membrane that is then used for ATP synthesis. This chain is Cytochrome b (mt-cyb), found in Anguilla dieffenbachii (New Zealand longfin eel).